The primary structure comprises 126 residues: Glycine cleavage system H protein (126 aa).

The Lipoyl-binding domain maps to K23–I104. K64 carries the N6-lipoyllysine modification.

Belongs to the GcvH family. In terms of assembly, the glycine cleavage system is composed of four proteins: P, T, L and H. (R)-lipoate is required as a cofactor.

Functionally, the glycine cleavage system catalyzes the degradation of glycine. The H protein shuttles the methylamine group of glycine from the P protein to the T protein. This Chlorobium phaeobacteroides (strain BS1) protein is Glycine cleavage system H protein.